A 153-amino-acid polypeptide reads, in one-letter code: SsrA-binding protein (153 aa).

Belongs to the SmpB family.

The protein localises to the cytoplasm. Its function is as follows. Required for rescue of stalled ribosomes mediated by trans-translation. Binds to transfer-messenger RNA (tmRNA), required for stable association of tmRNA with ribosomes. tmRNA and SmpB together mimic tRNA shape, replacing the anticodon stem-loop with SmpB. tmRNA is encoded by the ssrA gene; the 2 termini fold to resemble tRNA(Ala) and it encodes a 'tag peptide', a short internal open reading frame. During trans-translation Ala-aminoacylated tmRNA acts like a tRNA, entering the A-site of stalled ribosomes, displacing the stalled mRNA. The ribosome then switches to translate the ORF on the tmRNA; the nascent peptide is terminated with the 'tag peptide' encoded by the tmRNA and targeted for degradation. The ribosome is freed to recommence translation, which seems to be the essential function of trans-translation. This is SsrA-binding protein from Paramagnetospirillum magneticum (strain ATCC 700264 / AMB-1) (Magnetospirillum magneticum).